A 145-amino-acid polypeptide reads, in one-letter code: Transcription antitermination protein NusB (145 aa).

It belongs to the NusB family.

Involved in transcription antitermination. Required for transcription of ribosomal RNA (rRNA) genes. Binds specifically to the boxA antiterminator sequence of the ribosomal RNA (rrn) operons. The protein is Transcription antitermination protein NusB of Acidothermus cellulolyticus (strain ATCC 43068 / DSM 8971 / 11B).